A 115-amino-acid polypeptide reads, in one-letter code: Large ribosomal subunit protein bL19 (115 aa).

The protein belongs to the bacterial ribosomal protein bL19 family.

This protein is located at the 30S-50S ribosomal subunit interface and may play a role in the structure and function of the aminoacyl-tRNA binding site. In Lawsonia intracellularis (strain PHE/MN1-00), this protein is Large ribosomal subunit protein bL19.